A 435-amino-acid chain; its full sequence is Proline--tRNA ligase (435 aa).

The protein belongs to the class-II aminoacyl-tRNA synthetase family. ProS type 2 subfamily. Homodimer.

It localises to the cytoplasm. The catalysed reaction is tRNA(Pro) + L-proline + ATP = L-prolyl-tRNA(Pro) + AMP + diphosphate. Its function is as follows. Catalyzes the attachment of proline to tRNA(Pro) in a two-step reaction: proline is first activated by ATP to form Pro-AMP and then transferred to the acceptor end of tRNA(Pro). The polypeptide is Proline--tRNA ligase (Rhodospirillum rubrum (strain ATCC 11170 / ATH 1.1.1 / DSM 467 / LMG 4362 / NCIMB 8255 / S1)).